A 224-amino-acid chain; its full sequence is tRNA (guanine-N(7)-)-methyltransferase (224 aa).

S-adenosyl-L-methionine is bound by residues Glu-54, Glu-79, Glu-106, and Asp-129. Residue Asp-129 is part of the active site. Positions 133 and 165 each coordinate substrate.

The protein belongs to the class I-like SAM-binding methyltransferase superfamily. TrmB family.

It carries out the reaction guanosine(46) in tRNA + S-adenosyl-L-methionine = N(7)-methylguanosine(46) in tRNA + S-adenosyl-L-homocysteine. The protein operates within tRNA modification; N(7)-methylguanine-tRNA biosynthesis. In terms of biological role, catalyzes the formation of N(7)-methylguanine at position 46 (m7G46) in tRNA. This Chlamydia abortus (strain DSM 27085 / S26/3) (Chlamydophila abortus) protein is tRNA (guanine-N(7)-)-methyltransferase.